The chain runs to 96 residues: C-C motif chemokine 20 (96 aa).

The first 26 residues, 1–26 (MMCSSKNLLLAALMSVLLLHFCSKSE), serve as a signal peptide directing secretion. Disulfide bonds link C32–C58 and C33–C74.

This sequence belongs to the intercrine beta (chemokine CC) family.

The protein localises to the secreted. Its function is as follows. Acts as a ligand for C-C chemokine receptor CCR6. Signals through binding and activation of CCR6 and induces a strong chemotactic response and mobilization of intracellular calcium ions. The ligand-receptor pair CCL20-CCR6 is responsible for the chemotaxis of dendritic cells (DC), effector/memory T-cells and B-cells and plays an important role at skin and mucosal surfaces under homeostatic and inflammatory conditions, as well as in pathology, including cancer and autoimmune diseases. CCL20 acts as a chemotactic factor that attracts lymphocytes and, slightly, neutrophils, but not monocytes. Involved in the recruitment of both the pro-inflammatory IL17 producing helper T-cells (Th17) and the regulatory T-cells (Treg) to sites of inflammation. Required for optimal migration of thymic natural regulatory T cells (nTregs) and DN1 early thymocyte progenitor cells. Positively regulates sperm motility and chemotaxis via its binding to CCR6 which triggers Ca2+ mobilization in the sperm which is important for its motility. May be involved in formation and function of the mucosal lymphoid tissues by attracting lymphocytes and dendritic cells towards epithelial cells. The protein is C-C motif chemokine 20 (CCL20) of Bos taurus (Bovine).